Here is a 167-residue protein sequence, read N- to C-terminus: Translation initiation factor IF-3 (167 aa).

Belongs to the IF-3 family. Monomer.

The protein localises to the cytoplasm. IF-3 binds to the 30S ribosomal subunit and shifts the equilibrium between 70S ribosomes and their 50S and 30S subunits in favor of the free subunits, thus enhancing the availability of 30S subunits on which protein synthesis initiation begins. The chain is Translation initiation factor IF-3 from Shouchella clausii (strain KSM-K16) (Alkalihalobacillus clausii).